The sequence spans 485 residues: Pyruvate kinase (485 aa).

R33 contacts substrate. N35, S37, D67, and T68 together coordinate K(+). ATP is bound at residue N35 to H38. ATP contacts are provided by R74 and K155. E221 is a binding site for Mg(2+). 3 residues coordinate substrate: G244, D245, and T277. D245 is a Mg(2+) binding site.

It belongs to the pyruvate kinase family. Homotetramer. It depends on Mg(2+) as a cofactor. The cofactor is K(+).

The catalysed reaction is pyruvate + ATP = phosphoenolpyruvate + ADP + H(+). The protein operates within carbohydrate degradation; glycolysis; pyruvate from D-glyceraldehyde 3-phosphate: step 5/5. The chain is Pyruvate kinase (pyk) from Chlamydia trachomatis serovar L2 (strain ATCC VR-902B / DSM 19102 / 434/Bu).